The sequence spans 630 residues: Probable potassium transport system protein Kup 2 (630 aa).

Helical transmembrane passes span 17 to 37 (FWAL…TSPL), 56 to 76 (VIVL…VTAK), 108 to 128 (VFLM…SMIT), 145 to 165 (PALE…LFAF), 176 to 196 (AFGP…LIHI), 214 to 234 (FMLS…LAVT), 255 to 275 (WLFF…ALVL), 293 to 313 (FLVP…QAVI), 345 to 365 (IYLP…VLLF), 375 to 395 (YGIA…VVIW), 402 to 422 (PAAA…FFSA), and 427 to 447 (LLEG…LIWV).

This sequence belongs to the HAK/KUP transporter (TC 2.A.72) family.

The protein localises to the cell inner membrane. It carries out the reaction K(+)(in) + H(+)(in) = K(+)(out) + H(+)(out). Transport of potassium into the cell. Likely operates as a K(+):H(+) symporter. The sequence is that of Probable potassium transport system protein Kup 2 from Rhodopseudomonas palustris (strain BisB18).